Reading from the N-terminus, the 307-residue chain is Coproporphyrin III ferrochelatase (307 aa).

Fe-coproporphyrin III contacts are provided by residues Tyr-12, Arg-29, 45–46 (RY), Ser-53, and Tyr-124. Residues His-181 and Glu-263 each contribute to the Fe(2+) site.

The protein belongs to the ferrochelatase family.

Its subcellular location is the cytoplasm. The enzyme catalyses Fe-coproporphyrin III + 2 H(+) = coproporphyrin III + Fe(2+). Its pathway is porphyrin-containing compound metabolism; protoheme biosynthesis. Its function is as follows. Involved in coproporphyrin-dependent heme b biosynthesis. Catalyzes the insertion of ferrous iron into coproporphyrin III to form Fe-coproporphyrin III. This is Coproporphyrin III ferrochelatase from Staphylococcus saprophyticus subsp. saprophyticus (strain ATCC 15305 / DSM 20229 / NCIMB 8711 / NCTC 7292 / S-41).